The primary structure comprises 406 residues: Cysteine desulfurase (406 aa).

K226 bears the N6-(pyridoxal phosphate)lysine mark. The active-site Cysteine persulfide intermediate is the C364.

Belongs to the class-V pyridoxal-phosphate-dependent aminotransferase family. Csd subfamily. Homodimer. Interacts with SufE and the SufBCD complex composed of SufB, SufC and SufD. The interaction with SufE is required to mediate the direct transfer of the sulfur atom from the S-sulfanylcysteine. The cofactor is pyridoxal 5'-phosphate.

It localises to the cytoplasm. It catalyses the reaction (sulfur carrier)-H + L-cysteine = (sulfur carrier)-SH + L-alanine. It carries out the reaction L-selenocysteine + AH2 = hydrogenselenide + L-alanine + A + H(+). It functions in the pathway cofactor biosynthesis; iron-sulfur cluster biosynthesis. In terms of biological role, cysteine desulfurases mobilize the sulfur from L-cysteine to yield L-alanine, an essential step in sulfur metabolism for biosynthesis of a variety of sulfur-containing biomolecules. Component of the suf operon, which is activated and required under specific conditions such as oxidative stress and iron limitation. Acts as a potent selenocysteine lyase in vitro, that mobilizes selenium from L-selenocysteine. Selenocysteine lyase activity is however unsure in vivo. The chain is Cysteine desulfurase from Salmonella heidelberg (strain SL476).